We begin with the raw amino-acid sequence, 645 residues long: 1,4-alpha-glucan branching enzyme GlgB (645 aa).

Aspartate 309 functions as the Nucleophile in the catalytic mechanism. The active-site Proton donor is glutamate 352. The disordered stretch occupies residues 619–645 (VKTRKGSKKQDGSKTKVRSNVTSRGKR). Residues 636 to 645 (RSNVTSRGKR) are compositionally biased toward polar residues.

The protein belongs to the glycosyl hydrolase 13 family. GlgB subfamily. Monomer.

The catalysed reaction is Transfers a segment of a (1-&gt;4)-alpha-D-glucan chain to a primary hydroxy group in a similar glucan chain.. Its pathway is glycan biosynthesis; glycogen biosynthesis. Catalyzes the formation of the alpha-1,6-glucosidic linkages in glycogen by scission of a 1,4-alpha-linked oligosaccharide from growing alpha-1,4-glucan chains and the subsequent attachment of the oligosaccharide to the alpha-1,6 position. The sequence is that of 1,4-alpha-glucan branching enzyme GlgB from Bacillus cereus (strain Q1).